The sequence spans 55 residues: Large ribosomal subunit protein bL33 (55 aa).

The protein belongs to the bacterial ribosomal protein bL33 family.

The chain is Large ribosomal subunit protein bL33 from Burkholderia cenocepacia (strain ATCC BAA-245 / DSM 16553 / LMG 16656 / NCTC 13227 / J2315 / CF5610) (Burkholderia cepacia (strain J2315)).